We begin with the raw amino-acid sequence, 383 residues long: MSSSSELGNASSVPLQFLLFIDDRPNSQDSVQEIGQCLTNLLDGHSHDLQILQISKHPHLVEHFRLVATPSLIKLQPEPRQVLAGSNIIQQLQKWWPRWQQELAMDPNPEDTGQSPSCPREISSVGYSGELMKMSDELFLLKKDKEELLQQIQFKDQILAMLAHDLRSPLTAASIAVDTLELLQHKPIEEQKPALRSQLLYQARKQFKIMDRLIEDILQASKNLNSQFQVHGRPLAIADLCQEVLELYQAKFSKKNLTITYDIPKDLPNVFADEELIRQVIANLLDNAIKYTPAHGSITVGALHRTTQKVQVSITDNGPGIPNSKQETIFEGHFRLQRDEQTDGYGLGLSLCRKIIQAHYGQIWVDSRPKQGSSFHFTLPVYR.

Residues 161–383 (MLAHDLRSPL…SFHFTLPVYR (223 aa)) form the Histidine kinase domain. Position 164 is a phosphohistidine; by autocatalysis (H164).

As to quaternary structure, homooligomerizes. Interacts with KaiC1. Interacts with KaiC1 and RpaA. Binds to the B-loop in the CI domain of KaiC; SasA and KaiB compete to bind to the CI domain.

The enzyme catalyses ATP + protein L-histidine = ADP + protein N-phospho-L-histidine.. Member of the two-component regulatory system SasA/RpaA involved in genome-wide circadian gene expression. One of several clock output pathways. Participates in the Kai clock protein complex, the main circadian regulator in cyanobacteria, via its interaction with KaiC. KaiC enhances the autophosphorylation activity of SasA, which then transfers its phosphate group to RpaA to activate it. In addition to its output function, recruits fold-shifted KaiB (KaiB(fs)) to KaiC to cooperatively form the KaiB(6):KaiC(6) complex (independent of SasA kinase activity). Required for robustness of the circadian rhythm of gene expression and is involved in clock output, also required for adaptation to light/dark cycles. Functionally, plays an important role in glucose metabolism, important for expression of genes involved in glycolysis, gluconeogenesis, the oxidative pentose phosphate pathway, and glycogen metabolism. Required for heterotrophic growth. Overexpression from the psbAII promoter leads to altered levels of genes involved in carbon metabolism, increased levels of transcripts for clock oscillator genes in the light and the dark, complete loss of glycogen accumulation, decreased levels of metabolites of sugar catabolism and increased levels of amino acids in the light and increased levels of SigE protein. The sequence is that of Adaptive-response sensory kinase SasA from Synechocystis sp. (strain ATCC 27184 / PCC 6803 / Kazusa).